The sequence spans 199 residues: Dephospho-CoA kinase (199 aa).

The DPCK domain occupies 3–199; the sequence is KVGLTGGICS…DLLEFFTLYQ (197 aa). Position 11-16 (11-16) interacts with ATP; sequence CSGKST.

The protein belongs to the CoaE family.

The protein localises to the cytoplasm. The enzyme catalyses 3'-dephospho-CoA + ATP = ADP + CoA + H(+). It participates in cofactor biosynthesis; coenzyme A biosynthesis; CoA from (R)-pantothenate: step 5/5. Catalyzes the phosphorylation of the 3'-hydroxyl group of dephosphocoenzyme A to form coenzyme A. The sequence is that of Dephospho-CoA kinase from Clostridium perfringens (strain 13 / Type A).